Here is a 180-residue protein sequence, read N- to C-terminus: Ribosome maturation factor RimM (180 aa).

Positions 99–172 constitute a PRC barrel domain; the sequence is EDEFYQVDLI…FLVVDPVAAG (74 aa).

This sequence belongs to the RimM family. As to quaternary structure, binds ribosomal protein uS19.

It is found in the cytoplasm. Its function is as follows. An accessory protein needed during the final step in the assembly of 30S ribosomal subunit, possibly for assembly of the head region. Essential for efficient processing of 16S rRNA. May be needed both before and after RbfA during the maturation of 16S rRNA. It has affinity for free ribosomal 30S subunits but not for 70S ribosomes. The protein is Ribosome maturation factor RimM of Bartonella henselae (strain ATCC 49882 / DSM 28221 / CCUG 30454 / Houston 1) (Rochalimaea henselae).